Here is a 69-residue protein sequence, read N- to C-terminus: Amphipathic peptide CT2 (69 aa).

The N-terminal stretch at 1 to 23 (MKTQFVILIVAVVLLQLIANSEA) is a signal peptide. The residue at position 36 (Phe-36) is a Phenylalanine amide. Residues 40-69 (GLRNLDNLDDDIFEPEMSEADLRYLQDLLR) constitute a propeptide that is removed on maturation.

The protein belongs to the non-disulfide-bridged peptide (NDBP) superfamily. Short antimicrobial peptide (group 4) family. As to expression, expressed by the venom gland.

The protein localises to the secreted. It is found in the target cell membrane. In terms of biological role, amphipathic peptide that shows antibacterial activities against both Gram-positive (MIC=10 uM, 20 uM and 20 uM against S.aureus, B.subtilis and S.agalactiae, respectively) and Gram-negative bacteria (MIC=20 uM, 10 uM, and 10 uM against E.coli, S.typhi, and P.aeruginosa, respectively). Is mildly hemolytic at its MIC range, but shows a strong cytotoxic activity at higher concentrations, reaching 84% lysis at 50 uM. In Vaejovis mexicanus smithi (Mexican scorpion), this protein is Amphipathic peptide CT2.